A 556-amino-acid polypeptide reads, in one-letter code: 2-succinyl-5-enolpyruvyl-6-hydroxy-3-cyclohexene-1-carboxylate synthase (556 aa).

It belongs to the TPP enzyme family. MenD subfamily. As to quaternary structure, homodimer. The cofactor is Mg(2+). Mn(2+) is required as a cofactor. Thiamine diphosphate serves as cofactor.

The catalysed reaction is isochorismate + 2-oxoglutarate + H(+) = 5-enolpyruvoyl-6-hydroxy-2-succinyl-cyclohex-3-ene-1-carboxylate + CO2. The protein operates within quinol/quinone metabolism; 1,4-dihydroxy-2-naphthoate biosynthesis; 1,4-dihydroxy-2-naphthoate from chorismate: step 2/7. It participates in quinol/quinone metabolism; menaquinone biosynthesis. Functionally, catalyzes the thiamine diphosphate-dependent decarboxylation of 2-oxoglutarate and the subsequent addition of the resulting succinic semialdehyde-thiamine pyrophosphate anion to isochorismate to yield 2-succinyl-5-enolpyruvyl-6-hydroxy-3-cyclohexene-1-carboxylate (SEPHCHC). This is 2-succinyl-5-enolpyruvyl-6-hydroxy-3-cyclohexene-1-carboxylate synthase from Shigella flexneri serotype 5b (strain 8401).